The primary structure comprises 792 residues: RNA-binding protein RRM4 (792 aa).

Residues 37-60 (TDSTAQASHAAEQTIDAHQQAGDV) are disordered. RRM domains are found at residues 72-145 (PLLY…QDAS), 154-235 (KPRL…IDTA), and 321-398 (CNLF…LHEP). Over residues 412 to 424 (AANADNSDMSSNS) the composition is skewed to low complexity. 2 disordered regions span residues 412–438 (AANA…RQSR) and 630–649 (DESG…APVP). Over residues 640–649 (RASSGSAPVP) the composition is skewed to polar residues. Positions 715–792 (ATDDFIDSLQ…QHKVAAGLNK (78 aa)) constitute a PABC domain.

Belongs to the polyadenylate-binding protein type-1 family. In terms of assembly, part of large ribonucleoprotein complexes (mRNPs) containing RNA-binding proteins RRM4 and PAB1, endosome-binding protein UPA1, core scaffold protein UPA2 and associated factor GRP1. Interacts (via PABC domain) with UPA1 (via PAM2 domain).

It localises to the cytoplasm. Its subcellular location is the cytoskeleton. The protein localises to the endosome. Its function is as follows. Key RNA-binding protein involved in the formation of polar-growing hyphae which is essential for infection by the plant pathogen. During filamentation, assembles into particles that shuttle bidirectionally along microtubules to both poles. The RRM4 transport particles are part of the endosomal mRNP transport that regulates polarity of the infectious hyphae by transporting distinct mRNAs encoding, for example, the ubiquitin fusion protein UBI1, the small G protein RHO3, or the septin CDC3, from the nucleus to cell poles. Recognizes a broad spectrum of cargo mRNAs and precisely binds at stop codons, which constitute landmark sites of translation, suggesting an intimate connection of mRNA transport and translation. Also binds to the specific binding motif UAUG of cargo mRNAs via its third RRM. Plus-end-directed KIN3, a kinesin-3 type motor, mediates anterograde transport of RRM4-containing mRNPs whereas split dynein DYM1-DYN2 functions in retrograde movement of mRNPs. The chain is RNA-binding protein RRM4 from Mycosarcoma maydis (Corn smut fungus).